The primary structure comprises 906 residues: uncharacterized protein (906 aa).

Disordered regions lie at residues 231–322 and 865–906; these read KEDA…PSTI and AGAY…DEDE. A compositionally biased stretch (low complexity) spans 236 to 250; it reads TTKQTTTTTTTTPQT. Pro residues predominate over residues 264–281; sequence TPTPAPAPKPTTPKPTPA. Residues 302-314 show a composition bias toward polar residues; that stretch reads SVNNIPTPSDTNE. Acidic residues predominate over residues 867–906; sequence AYEDDDDDEGEGNEDDEDNDENEDEDEGEGEGDSSEDEDE.

This is an uncharacterized protein from Dictyostelium sp. (strain GA11) (Slime mold).